The following is a 364-amino-acid chain: Adenine deaminase (364 aa).

3 residues coordinate Zn(2+): H25, H27, and H221. Residue E224 is the Proton donor of the active site. D301 is a binding site for Zn(2+). D302 contributes to the substrate binding site.

This sequence belongs to the metallo-dependent hydrolases superfamily. Adenosine and AMP deaminases family. Adenine deaminase type 2 subfamily. Zn(2+) is required as a cofactor.

It localises to the cytoplasm. The protein resides in the nucleus. The catalysed reaction is adenine + H2O + H(+) = hypoxanthine + NH4(+). Its function is as follows. Catalyzes the hydrolytic deamination of adenine to hypoxanthine. Plays an important role in the purine salvage pathway and in nitrogen catabolism. Has no activity with adenosine as a substrate. This chain is Adenine deaminase (aah1), found in Emericella nidulans (strain FGSC A4 / ATCC 38163 / CBS 112.46 / NRRL 194 / M139) (Aspergillus nidulans).